Reading from the N-terminus, the 346-residue chain is MDTGPDQSYFSGNHWFVFSVYLLTFLVGLPLNLLALVVFVGKLRCRPVAVDVLLLNLTASDLLLLLFLPFRMVEAANGMHWPLPFILCPLSGFIFFTTIYLTALFLAAVSIERFLSVAHPLWYKTRPRLGQAGLVSVACWLLASAHCSVVYVIEFSGDISHSQGTNGTCYLEFRKDQLAILLPVRLEMAVVLFVVPLIITSYCYSRLVWILGRGGSHRRQRRVAGLVAATLLNFLVCFGPYNVSHVVGYICGESPVWRIYVTLLSTLNSCVDPFVYYFSSSGFQADFHELLRRLCGLWGQWQQESSMELKEQKGGEEQRADRPAERKTSEHSQGCGTGGQVACAEN.

At methionine 1 to serine 19 the chain is on the extracellular side. The helical transmembrane segment at valine 20–valine 40 threads the bilayer. Residues glycine 41–proline 47 are Cytoplasmic-facing. A helical transmembrane segment spans residues valine 48 to leucine 68. Topologically, residues proline 69–leucine 90 are extracellular. The helical transmembrane segment at serine 91–isoleucine 111 threads the bilayer. At glutamate 112 to alanine 132 the chain is on the cytoplasmic side. The chain crosses the membrane as a helical span at residues glycine 133 to isoleucine 153. At glutamate 154–leucine 178 the chain is on the extracellular side. Asparagine 166 carries N-linked (GlcNAc...) asparagine glycosylation. The chain crosses the membrane as a helical span at residues alanine 179–isoleucine 199. Topologically, residues threonine 200 to arginine 222 are cytoplasmic. A helical membrane pass occupies residues valine 223–valine 243. The Extracellular segment spans residues serine 244 to arginine 258. A helical transmembrane segment spans residues isoleucine 259 to serine 279. Over serine 280 to asparagine 346 the chain is Cytoplasmic. Positions methionine 307–glutamate 330 are enriched in basic and acidic residues. The tract at residues methionine 307–asparagine 346 is disordered.

The protein belongs to the G-protein coupled receptor 1 family.

Its subcellular location is the cell membrane. Its function is as follows. G protein-coupled receptor that is activated by short chain fatty acids (SCFAs), such as propionate. Hence may play a role in the regulation of whole-body energy homeostasis and/or in intestinal immunity. The chain is G-protein coupled receptor 42 (GPR42) from Homo sapiens (Human).